The following is a 351-amino-acid chain: Glycerol-3-phosphate dehydrogenase [NAD(P)+] (351 aa).

NADPH is bound by residues serine 12, tryptophan 13, histidine 33, and lysine 114. The sn-glycerol 3-phosphate site is built by lysine 114, glycine 145, and serine 147. Alanine 149 is a binding site for NADPH. 5 residues coordinate sn-glycerol 3-phosphate: lysine 200, aspartate 253, serine 263, arginine 264, and asparagine 265. Residue lysine 200 is the Proton acceptor of the active site. Arginine 264 is a binding site for NADPH. Residues valine 288 and glutamate 290 each contribute to the NADPH site.

Belongs to the NAD-dependent glycerol-3-phosphate dehydrogenase family.

It localises to the cytoplasm. It carries out the reaction sn-glycerol 3-phosphate + NAD(+) = dihydroxyacetone phosphate + NADH + H(+). It catalyses the reaction sn-glycerol 3-phosphate + NADP(+) = dihydroxyacetone phosphate + NADPH + H(+). It participates in membrane lipid metabolism; glycerophospholipid metabolism. Functionally, catalyzes the reduction of the glycolytic intermediate dihydroxyacetone phosphate (DHAP) to sn-glycerol 3-phosphate (G3P), the key precursor for phospholipid synthesis. This chain is Glycerol-3-phosphate dehydrogenase [NAD(P)+], found in Lacticaseibacillus casei (strain BL23) (Lactobacillus casei).